Reading from the N-terminus, the 160-residue chain is SsrA-binding protein (160 aa).

The tract at residues 131-160 (KKEYDKRHTERERDSDRELQRAVRTKGKDD) is disordered.

Belongs to the SmpB family.

The protein resides in the cytoplasm. Its function is as follows. Required for rescue of stalled ribosomes mediated by trans-translation. Binds to transfer-messenger RNA (tmRNA), required for stable association of tmRNA with ribosomes. tmRNA and SmpB together mimic tRNA shape, replacing the anticodon stem-loop with SmpB. tmRNA is encoded by the ssrA gene; the 2 termini fold to resemble tRNA(Ala) and it encodes a 'tag peptide', a short internal open reading frame. During trans-translation Ala-aminoacylated tmRNA acts like a tRNA, entering the A-site of stalled ribosomes, displacing the stalled mRNA. The ribosome then switches to translate the ORF on the tmRNA; the nascent peptide is terminated with the 'tag peptide' encoded by the tmRNA and targeted for degradation. The ribosome is freed to recommence translation, which seems to be the essential function of trans-translation. The chain is SsrA-binding protein from Pseudomonas syringae pv. tomato (strain ATCC BAA-871 / DC3000).